Reading from the N-terminus, the 525-residue chain is MTQNIHQHRILILDFGSQYTQLVARRVRELGVYCELWAWDVTEAQIRGFNPNGIILSGGPESTTEFGSPRAPEYVFNAGVPVLGVCYGMQTMAMQLGGHVEGSNEREFGYAQVEVKTDSALVRDIQDALSATGAPLLDVWMSHGDKVTAIPEGFETVASTDTCPFAIMANEEKRFYGVQFHPEVTHTRQGQRMLERFVRDICQCEALWTPAKIIDDAVTRIREQVGNDQVILGLSGGVDSSVTAMLLHRAIGDRLTCVFVDNGLLRLNEADQVLEMFGDHFGLNIVHVAAEDRFLGELAGENDPEAKRKIIGRVFVEVFDEEASKQTDVKWLAQGTIYPDVIESAASATGKAHVIKSHHNVGGLPKEMKLGLVEPLKELFKDEVRKIGLELGLPYNMLYRHPFPGPGLGVRVLGEVKKEYCDLLRRADAIFIEELHKADLYNKVSQAFTVFLPVRSVGVMGDGRKYDWVVSLRAVETIDFMTAHWAHLPYDFLGRVSNRIINEVDGISRVVYDVSGKPPATIEWE.

In terms of domain architecture, Glutamine amidotransferase type-1 spans 9–207 (RILILDFGSQ…VRDICQCEAL (199 aa)). Cysteine 86 acts as the Nucleophile in catalysis. Active-site residues include histidine 181 and glutamate 183. Residues 208-400 (WTPAKIIDDA…LGLPYNMLYR (193 aa)) form the GMPS ATP-PPase domain. 235-241 (SGGVDSS) is a binding site for ATP.

Homodimer.

The catalysed reaction is XMP + L-glutamine + ATP + H2O = GMP + L-glutamate + AMP + diphosphate + 2 H(+). Its pathway is purine metabolism; GMP biosynthesis; GMP from XMP (L-Gln route): step 1/1. Catalyzes the synthesis of GMP from XMP. This is GMP synthase [glutamine-hydrolyzing] from Pectobacterium carotovorum subsp. carotovorum (strain PC1).